A 330-amino-acid chain; its full sequence is 3',5'-cyclic-nucleotide phosphodiesterase (330 aa).

The first 22 residues, 1–22 (MFKNKLAVLFTCLSVFSFSAQS), serve as a signal peptide directing secretion.

The protein belongs to the cyclic nucleotide phosphodiesterase class-II family.

The protein resides in the periplasm. It catalyses the reaction a nucleoside 3',5'-cyclic phosphate + H2O = a nucleoside 5'-phosphate + H(+). Functionally, seems to allow the organism to grow on cAMP. The chain is 3',5'-cyclic-nucleotide phosphodiesterase (cpdP) from Aliivibrio fischeri (Vibrio fischeri).